The following is a 354-amino-acid chain: Ornithine carbamoyltransferase, catabolic (354 aa).

Residues 67-70 (STRT), Q94, R118, and 145-148 (HPTQ) contribute to the carbamoyl phosphate site. L-ornithine contacts are provided by residues N177, D241, and 245–246 (SM). Carbamoyl phosphate contacts are provided by residues 284–285 (CL) and R329.

It belongs to the aspartate/ornithine carbamoyltransferase superfamily. OTCase family.

The protein resides in the cytoplasm. The catalysed reaction is carbamoyl phosphate + L-ornithine = L-citrulline + phosphate + H(+). The protein operates within amino-acid degradation; L-arginine degradation via ADI pathway; carbamoyl phosphate from L-arginine: step 2/2. Functionally, reversibly catalyzes the transfer of the carbamoyl group from carbamoyl phosphate (CP) to the N(epsilon) atom of ornithine (ORN) to produce L-citrulline. This Lactococcus lactis subsp. cremoris (strain MG1363) protein is Ornithine carbamoyltransferase, catabolic (arcB).